The sequence spans 159 residues: 3-hydroxyacyl-[acyl-carrier-protein] dehydratase FabZ (159 aa).

Residue histidine 59 is part of the active site.

The protein belongs to the thioester dehydratase family. FabZ subfamily.

Its subcellular location is the cytoplasm. It carries out the reaction a (3R)-hydroxyacyl-[ACP] = a (2E)-enoyl-[ACP] + H2O. In terms of biological role, involved in unsaturated fatty acids biosynthesis. Catalyzes the dehydration of short chain beta-hydroxyacyl-ACPs and long chain saturated and unsaturated beta-hydroxyacyl-ACPs. This chain is 3-hydroxyacyl-[acyl-carrier-protein] dehydratase FabZ, found in Caulobacter vibrioides (strain ATCC 19089 / CIP 103742 / CB 15) (Caulobacter crescentus).